We begin with the raw amino-acid sequence, 212 residues long: Large ribosomal subunit protein uL1 (212 aa).

It belongs to the universal ribosomal protein uL1 family. In terms of assembly, part of the 50S ribosomal subunit.

Binds directly to 23S rRNA. Probably involved in E site tRNA release. Functionally, protein L1 is also a translational repressor protein, it controls the translation of its operon by binding to its mRNA. The protein is Large ribosomal subunit protein uL1 of Halobacterium salinarum (strain ATCC 29341 / DSM 671 / R1).